Reading from the N-terminus, the 253-residue chain is 1-(5-phosphoribosyl)-5-[(5-phosphoribosylamino)methylideneamino] imidazole-4-carboxamide isomerase (253 aa).

Catalysis depends on Asp-8, which acts as the Proton acceptor. Asp-129 serves as the catalytic Proton donor.

This sequence belongs to the HisA/HisF family.

The protein resides in the cytoplasm. It carries out the reaction 1-(5-phospho-beta-D-ribosyl)-5-[(5-phospho-beta-D-ribosylamino)methylideneamino]imidazole-4-carboxamide = 5-[(5-phospho-1-deoxy-D-ribulos-1-ylimino)methylamino]-1-(5-phospho-beta-D-ribosyl)imidazole-4-carboxamide. It participates in amino-acid biosynthesis; L-histidine biosynthesis; L-histidine from 5-phospho-alpha-D-ribose 1-diphosphate: step 4/9. The polypeptide is 1-(5-phosphoribosyl)-5-[(5-phosphoribosylamino)methylideneamino] imidazole-4-carboxamide isomerase (Microcystis aeruginosa (strain NIES-843 / IAM M-2473)).